A 120-amino-acid polypeptide reads, in one-letter code: uncharacterized protein (120 aa).

Residues 22–44 (ITVASCIGAAQGALFSIASALLL) form a helical membrane-spanning segment. Residue N114 is glycosylated (N-linked (GlcNAc...) asparagine).

It localises to the membrane. This is an uncharacterized protein from Saccharomyces cerevisiae (strain ATCC 204508 / S288c) (Baker's yeast).